The primary structure comprises 664 residues: UV-stimulated scaffold protein A homolog (664 aa).

Residues 10 to 153 form a VHS-like region; it reads KVIGLIEKAT…LKNTLKLKFP (144 aa). Positions 148 to 180 form a coiled coil; sequence LKLKFPDLQANAARIQRERQEREMKTKEILRNK. Disordered stretches follow at residues 330–350 and 362–403; these read HGNEETNEEEEDIWEEDDGKV and MRTQ…GNSL. Over residues 334-347 the composition is skewed to acidic residues; sequence ETNEEEEDIWEEDD. A compositionally biased stretch (polar residues) spans 363 to 374; it reads RTQQSENSSLPS. Residues 377 to 387 show a composition bias toward basic and acidic residues; sequence EAKKSTSEARS. Positions 388–402 are enriched in polar residues; that stretch reads NKVSNTKKVGSSGNS. The UVSSA-type zinc finger occupies 473–500; sequence TPPCRASLKKGGLCQRRDLRVCPFHGPI. 4 residues coordinate Zn(2+): C476, C486, C494, and H497. Disordered regions lie at residues 514-546 and 640-664; these read SPLDESENQTSSTSGTNQDVSMDETTSDSDPNQ and VKGTNPQQLAQGNDEKCRDTSANQW. 2 stretches are compositionally biased toward polar residues: residues 521–533 and 640–650; these read NQTSSTSGTNQDV and VKGTNPQQLAQ.

The protein belongs to the UVSSA family.

The protein resides in the chromosome. The protein is UV-stimulated scaffold protein A homolog of Arabidopsis thaliana (Mouse-ear cress).